Reading from the N-terminus, the 675-residue chain is DNA ligase 1 (675 aa).

NAD(+) contacts are provided by residues 34–38 (DFEYD), 83–84 (SL), and Glu-114. Lys-116 (N6-AMP-lysine intermediate) is an active-site residue. The NAD(+) site is built by Arg-137, Glu-177, Lys-295, and Lys-319. Cys-413, Cys-416, Cys-431, and Cys-436 together coordinate Zn(2+). A BRCT domain is found at 596-675 (NSGSALAGKT…AEFLRLLSGG (80 aa)).

Belongs to the NAD-dependent DNA ligase family. LigA subfamily. It depends on Mg(2+) as a cofactor. Mn(2+) is required as a cofactor.

The catalysed reaction is NAD(+) + (deoxyribonucleotide)n-3'-hydroxyl + 5'-phospho-(deoxyribonucleotide)m = (deoxyribonucleotide)n+m + AMP + beta-nicotinamide D-nucleotide.. Its function is as follows. DNA ligase that catalyzes the formation of phosphodiester linkages between 5'-phosphoryl and 3'-hydroxyl groups in double-stranded DNA using NAD as a coenzyme and as the energy source for the reaction. It is essential for DNA replication and repair of damaged DNA. This is DNA ligase 1 from Opitutus terrae (strain DSM 11246 / JCM 15787 / PB90-1).